Reading from the N-terminus, the 1153-residue chain is PPi-type phosphoenolpyruvate carboxykinase 2 (1153 aa).

A coiled-coil region spans residues 1085-1131 (RQKLEVAKLNKDLAYLNKTIAEKPRLVETLNKQIAAVKEELQYVSSE).

Belongs to the PPi-type phosphoenolpyruvate carboxykinase family. Monomer and trimer; forms heterotrimers with PEPCK1 and PEPCK3.

The protein localises to the cytoplasm. It is found in the cytosol. The catalysed reaction is oxaloacetate + diphosphate = phosphoenolpyruvate + phosphate + CO2. Its function is as follows. Inorganic pyrophosphate (PPi)-dependent phosphoenolpyruvate carboxykinase, which regulates the carbon flow of the central metabolism by fixing CO(2) to phosphoenolpyruvate to produce oxaloacetate. Can also produce pyruvate and diphosphate from phosphoenolpyruvate and phosphate. The polypeptide is PPi-type phosphoenolpyruvate carboxykinase 2 (Entamoeba histolytica (strain ATCC 30459 / HM-1:IMSS / ABRM)).